The primary structure comprises 67 residues: Large ribosomal subunit protein uL29 (67 aa).

The protein belongs to the universal ribosomal protein uL29 family.

In Gemmatimonas aurantiaca (strain DSM 14586 / JCM 11422 / NBRC 100505 / T-27), this protein is Large ribosomal subunit protein uL29.